The primary structure comprises 341 residues: GTP 3',8-cyclase (341 aa).

The Radical SAM core domain occupies 17–235 (TYGRVATDLR…LRTRFELTAE (219 aa)). Arginine 26 is a binding site for GTP. [4Fe-4S] cluster contacts are provided by cysteine 33 and cysteine 37. S-adenosyl-L-methionine is bound at residue tyrosine 39. Cysteine 40 provides a ligand contact to [4Fe-4S] cluster. Arginine 77 provides a ligand contact to GTP. Residue glycine 81 coordinates S-adenosyl-L-methionine. Position 108 (threonine 108) interacts with GTP. Serine 132 provides a ligand contact to S-adenosyl-L-methionine. A GTP-binding site is contributed by lysine 169. Methionine 203 serves as a coordination point for S-adenosyl-L-methionine. The [4Fe-4S] cluster site is built by cysteine 268 and cysteine 271. Residue 273–275 (RTR) coordinates GTP. Cysteine 285 contacts [4Fe-4S] cluster.

It belongs to the radical SAM superfamily. MoaA family. In terms of assembly, monomer and homodimer. Requires [4Fe-4S] cluster as cofactor.

The catalysed reaction is GTP + AH2 + S-adenosyl-L-methionine = (8S)-3',8-cyclo-7,8-dihydroguanosine 5'-triphosphate + 5'-deoxyadenosine + L-methionine + A + H(+). Its pathway is cofactor biosynthesis; molybdopterin biosynthesis. Functionally, catalyzes the cyclization of GTP to (8S)-3',8-cyclo-7,8-dihydroguanosine 5'-triphosphate. The protein is GTP 3',8-cyclase of Streptomyces coelicolor (strain ATCC BAA-471 / A3(2) / M145).